We begin with the raw amino-acid sequence, 302 residues long: uncharacterized protein (302 aa).

Residues 1–24 (MTEISELASSSQKPEKTKYNLPKP) are disordered.

This is an uncharacterized protein from Schizosaccharomyces pombe (strain 972 / ATCC 24843) (Fission yeast).